The primary structure comprises 905 residues: Protein LONGIFOLIA 2 (905 aa).

Disordered regions lie at residues 42 to 136 (VSGG…GGLM), 232 to 268 (RLSLDSRSNSFRSPRADAARSSCPEEPATMTHRRSSS), 285 to 315 (DTEQRRENRFCDSPRPMSRVEPTALQRSRSV), 432 to 585 (STSP…SDSN), 606 to 626 (CDFPEQHTPKQRSPDFGIKQD), and 690 to 711 (VPFPQSNRGPMKPSSDHFECSP). Residues 65-74 (ESDKETERSS) are compositionally biased toward basic and acidic residues. Over residues 90–117 (FESSSRPSFSSSPRSSSFSSAEVSTTAS) the composition is skewed to low complexity. The segment covering 286–296 (TEQRRENRFCD) has biased composition (basic and acidic residues). Polar residues-rich tracts occupy residues 432–461 (STSPLPQNVTLPNVKVGNSRQTRKVTSGKQ), 477–487 (LDSTKSNSPKT), and 501–516 (MTKSGRSQQHSVSPRT). The span at 566–581 (PDDRLSDARSDLRSLR) shows a compositional bias: basic and acidic residues.

As to quaternary structure, interacts (via C-terminus) with TON1A and TON1B.

Its subcellular location is the cytoplasm. The protein localises to the cytoskeleton. Its function is as follows. In association with LNG1, regulates leaf morphology by promoting longitudinal polar cell elongation independently of ROT3. Associates with microtubules and recruits TON1A and TON1B to the cytoskeleton through its C-terminus. In Arabidopsis thaliana (Mouse-ear cress), this protein is Protein LONGIFOLIA 2 (LNG2).